Consider the following 261-residue polypeptide: 3-methyl-2-oxobutanoate hydroxymethyltransferase (261 aa).

Mg(2+) is bound by residues Asp-42 and Asp-81. Residues 42–43 (DS), Asp-81, and Lys-110 each bind 3-methyl-2-oxobutanoate. Position 112 (Glu-112) interacts with Mg(2+). Catalysis depends on Glu-179, which acts as the Proton acceptor.

This sequence belongs to the PanB family. Homodecamer; pentamer of dimers. Requires Mg(2+) as cofactor.

It localises to the cytoplasm. It catalyses the reaction 3-methyl-2-oxobutanoate + (6R)-5,10-methylene-5,6,7,8-tetrahydrofolate + H2O = 2-dehydropantoate + (6S)-5,6,7,8-tetrahydrofolate. It functions in the pathway cofactor biosynthesis; coenzyme A biosynthesis. Catalyzes the reversible reaction in which hydroxymethyl group from 5,10-methylenetetrahydrofolate is transferred onto alpha-ketoisovalerate to form ketopantoate. This is 3-methyl-2-oxobutanoate hydroxymethyltransferase from Pyrobaculum neutrophilum (strain DSM 2338 / JCM 9278 / NBRC 100436 / V24Sta) (Thermoproteus neutrophilus).